Consider the following 124-residue polypeptide: MNIIAIAVGAAIGANLRYSLSIWAAQRWGASFPYGTLIVNVIGSFAIGFVLVLATTRLSLSDTARLLIVTGLLGGFTTFSSLSFETYTLVTSGSWMAAGLYVLSSFGLGIAGVFLGAGVARVLP.

4 helical membrane passes run 3–23 (IIAIAVGAAIGANLRYSLSIW), 34–54 (YGTLIVNVIGSFAIGFVLVLA), 66–86 (LLIVTGLLGGFTTFSSLSFET), and 100–120 (LYVLSSFGLGIAGVFLGAGVA). Na(+) contacts are provided by Gly74 and Thr77.

Belongs to the fluoride channel Fluc/FEX (TC 1.A.43) family.

The protein resides in the cell membrane. The catalysed reaction is fluoride(in) = fluoride(out). Na(+) is not transported, but it plays an essential structural role and its presence is essential for fluoride channel function. Its function is as follows. Fluoride-specific ion channel. Important for reducing fluoride concentration in the cell, thus reducing its toxicity. In Roseiflexus sp. (strain RS-1), this protein is Fluoride-specific ion channel FluC.